The sequence spans 79 residues: Cyclotide phyb-A (79 aa).

A propeptide spanning residues 1-43 (MVGVNSLRSALYLIVLILFVQLTYFSDARVMDVDLSRAFLPLT) is cleaved from the precursor. The segment at residues 44–73 (GIGCGESCVWIPCVSAAIGCSCSNKICYRN) is a cross-link (cyclopeptide (Gly-Asn)). 3 disulfides stabilise this stretch: Cys-47–Cys-63, Cys-51–Cys-65, and Cys-56–Cys-70. A propeptide spanning residues 74-79 (GIIPKK) is cleaved from the precursor.

This is a cyclic peptide. In terms of processing, contains 3 disulfide bonds. Expressed in midvein, lamina and periphery of leaves (at protein level).

Functionally, probably participates in a plant defense mechanism. The protein is Cyclotide phyb-A of Petunia hybrida (Petunia).